A 500-amino-acid polypeptide reads, in one-letter code: AAA-ATPase At3g28580 (500 aa).

Residues 7-29 (LWTNTGSALATLMFVYTIFKQFF) form a helical membrane-spanning segment. Positions 174 to 193 (NRERKLYSNTPGQSHGNNSK) are disordered. Residues 180–193 (YSNTPGQSHGNNSK) are compositionally biased toward polar residues. 247 to 254 (GPPGTGKS) is an ATP binding site. A disordered region spans residues 462 to 500 (KEEAKKKVEEEEEEKQRKKEKVKEIEAEKEKKKKIEEEN).

It belongs to the AAA ATPase family. BCS1 subfamily. It depends on Mg(2+) as a cofactor.

It is found in the membrane. The enzyme catalyses ATP + H2O = ADP + phosphate + H(+). This is AAA-ATPase At3g28580 from Arabidopsis thaliana (Mouse-ear cress).